The sequence spans 563 residues: Alpha-keto-acid decarboxylase (563 aa).

Thiamine diphosphate is bound at residue glutamate 59. The interval 347-367 (SSPPVASPPAEPLPPPPPREQ) is disordered. Residues 351-366 (VASPPAEPLPPPPPRE) show a composition bias toward pro residues. Positions 394–476 (TSFYGMADHR…VVVNNDGYTV (83 aa)) are thiamine pyrophosphate binding. Residues aspartate 444, asparagine 471, and glycine 473 each coordinate Mg(2+).

This sequence belongs to the TPP enzyme family. Requires a metal cation as cofactor. Thiamine diphosphate is required as a cofactor.

Decarboxylates branched-chain and aromatic alpha-keto acids to aldehydes. The protein is Alpha-keto-acid decarboxylase (kdc) of Mycolicibacterium paratuberculosis (strain ATCC BAA-968 / K-10) (Mycobacterium paratuberculosis).